We begin with the raw amino-acid sequence, 528 residues long: Cytochrome P450 monooxygenase polB (528 aa).

The helical transmembrane segment at 3 to 23 (SFFLVCPVAFLGFTICYLVYV) threads the bilayer. C473 contacts heme.

This sequence belongs to the cytochrome P450 family. It depends on heme as a cofactor.

The protein resides in the membrane. It carries out the reaction 4beta-carboxyl motiol + reduced [NADPH--hemoprotein reductase] + O2 = 2alpha-hydroxyl, 4beta-carboxyl motiol + oxidized [NADPH--hemoprotein reductase] + H2O + H(+). It catalyses the reaction 2-deoxypolytolypin + reduced [NADPH--hemoprotein reductase] + O2 = polytolypin + oxidized [NADPH--hemoprotein reductase] + H2O + H(+). It functions in the pathway secondary metabolite biosynthesis; terpenoid biosynthesis. Functionally, cytochrome P450 monooxygenase; part of the gene cluster that mediates the biosynthesis of antifungal fernane-type triterpenoid polytolypin. PolB acts as a hydroxylase and installs the 2-alpha-hydroxyl group in polytolypin. Within the pathway, the triterpene cyclase polA first catalyzes the cyclization of 2,3-oxidosqualene to motiol, polC converts the 4-alpha-methyl group of motiol to a carboxyl group, polB is responsible for appending a hydroxyl group at the 2-alpha position and polE is a dual functional P450, which can catalyze the formation of both the 1-beta-hydroxyl group and 10-beta-carboxyl group. The protein is Cytochrome P450 monooxygenase polB of Polytolypa hystricis (strain UAMH7299).